Here is a 371-residue protein sequence, read N- to C-terminus: Aminomethyltransferase (371 aa).

It belongs to the GcvT family. As to quaternary structure, the glycine cleavage system is composed of four proteins: P, T, L and H.

It carries out the reaction N(6)-[(R)-S(8)-aminomethyldihydrolipoyl]-L-lysyl-[protein] + (6S)-5,6,7,8-tetrahydrofolate = N(6)-[(R)-dihydrolipoyl]-L-lysyl-[protein] + (6R)-5,10-methylene-5,6,7,8-tetrahydrofolate + NH4(+). In terms of biological role, the glycine cleavage system catalyzes the degradation of glycine. The protein is Aminomethyltransferase of Pectobacterium carotovorum subsp. carotovorum (strain PC1).